Consider the following 1268-residue polypeptide: Vigilin (1268 aa).

Position 2 is an N-acetylserine (S2). T8 is modified (phosphothreonine). 3 positions are modified to phosphoserine: S11, S31, and S35. 14 KH domains span residues 158–229 (PKEH…RLEV), 230–302 (EKAF…AVEV), 303–371 (KKSQ…SVAA), 372–442 (PSWL…EINI), 443–514 (DHKF…DLII), 515–588 (EQRF…SVPI), 589–660 (FKQF…EVSI), 661–734 (PAKL…DIRA), 735–807 (KPEY…SMLV), 808–880 (DPKH…ECAI), 881–979 (PQKF…EVEV), 980–1059 (PFDL…SVTV), 1060–1134 (DPKY…DVPL), and 1135–1209 (DHRV…ALQV). T295 and T296 each carry phosphothreonine. A Phosphoserine modification is found at S317. Y437 is subject to Phosphotyrosine. At S645 the chain carries Phosphoserine. The disordered stretch occupies residues 914 to 944 (ENAVHSTEPVVQENGDEAGEGREAKDCDPGS). Positions 932–944 (GEGREAKDCDPGS) are enriched in basic and acidic residues. The residue at position 991 (K991) is an N6-acetyllysine. A disordered region spans residues 1233 to 1268 (WTASSSEKAPDMSSSEEFPSFGAQVAPKTLPWGPKR). The segment covering 1234-1249 (TASSSEKAPDMSSSEE) has biased composition (polar residues). 2 positions are modified to phosphoserine: S1247 and S1252.

It localises to the cytoplasm. It is found in the nucleus. Appears to play a role in cell sterol metabolism. It may function to protect cells from over-accumulation of cholesterol. This is Vigilin (HDLBP) from Homo sapiens (Human).